Reading from the N-terminus, the 209-residue chain is dTTP/UTP pyrophosphatase (209 aa).

Asp79 (proton acceptor) is an active-site residue.

This sequence belongs to the Maf family. YhdE subfamily. The cofactor is a divalent metal cation.

Its subcellular location is the cytoplasm. It catalyses the reaction dTTP + H2O = dTMP + diphosphate + H(+). It carries out the reaction UTP + H2O = UMP + diphosphate + H(+). In terms of biological role, nucleoside triphosphate pyrophosphatase that hydrolyzes dTTP and UTP. May have a dual role in cell division arrest and in preventing the incorporation of modified nucleotides into cellular nucleic acids. The protein is dTTP/UTP pyrophosphatase of Chelativorans sp. (strain BNC1).